A 156-amino-acid chain; its full sequence is Bacterial microcompartment shell protein PduK (156 aa).

One can recognise a BMC domain in the interval 4 to 89; sequence SLGLLEVSGL…PGDGILSHSV (86 aa). The disordered stretch occupies residues 81 to 119; it reads GDGILSHSVTPESESEPAPAPTPVVPHEEIPEDHAAPEA. Positions 106-116 are enriched in basic and acidic residues; sequence PHEEIPEDHAA.

It belongs to the bacterial microcompartments protein family. In terms of assembly, interacts with shell protein PduA and assembly protein PduM. Interacts with PduP, probably with its first 18 residues. Requires Fe cation as cofactor.

It is found in the bacterial microcompartment. It participates in polyol metabolism; 1,2-propanediol degradation. Functionally, a minor shell protein of the bacterial microcompartment (BMC) dedicated to 1,2-propanediol (1,2-PD) degradation. In terms of biological role, expression of a cosmid containing the full 21-gene pdu operon in E.coli allows E.coli to grow on 1,2-propanediol (1,2-PD) with the appearance of bacterial microcompartments (BMC) in its cytoplasm. Overexpression of this protein leads to the appearance of a single large aggregate complex in the cytoplasm. The 1,2-PD-specific bacterial microcompartment (BMC) concentrates low levels of 1,2-PD catabolic enzymes, concentrates volatile reaction intermediates thus enhancing pathway flux and keeps the level of toxic, mutagenic propionaldehyde low. This is Bacterial microcompartment shell protein PduK from Citrobacter freundii.